Consider the following 629-residue polypeptide: tRNA uridine 5-carboxymethylaminomethyl modification enzyme MnmG (629 aa).

FAD-binding positions include 14–19 (GAGHAG), V126, and S181. 273–287 (GPRYCPSIEDKVVRF) contacts NAD(+). Residue Q370 participates in FAD binding.

It belongs to the MnmG family. Homodimer. Heterotetramer of two MnmE and two MnmG subunits. FAD serves as cofactor.

The protein localises to the cytoplasm. Functionally, NAD-binding protein involved in the addition of a carboxymethylaminomethyl (cmnm) group at the wobble position (U34) of certain tRNAs, forming tRNA-cmnm(5)s(2)U34. The protein is tRNA uridine 5-carboxymethylaminomethyl modification enzyme MnmG of Bacillus cereus (strain ZK / E33L).